Here is a 127-residue protein sequence, read N- to C-terminus: Protein ApaG (127 aa).

The 125-residue stretch at 3–127 (NDQKYDIKVQ…FILSVPRVLH (125 aa)) folds into the ApaG domain.

The sequence is that of Protein ApaG from Nitrosomonas eutropha (strain DSM 101675 / C91 / Nm57).